The sequence spans 169 residues: Superoxide dismutase [Cu-Zn] 1 (169 aa).

A signal peptide spans 1–18; the sequence is MFEQWDALCAVLFSFSIA. Cu cation is bound by residues histidine 65, histidine 67, and histidine 83. Cysteine 72 and cysteine 165 are disulfide-bonded. Histidine 83, histidine 91, histidine 100, and aspartate 103 together coordinate Zn(2+). Histidine 145 lines the Cu cation pocket.

The protein belongs to the Cu-Zn superoxide dismutase family. Cu cation serves as cofactor. It depends on Zn(2+) as a cofactor.

It catalyses the reaction 2 superoxide + 2 H(+) = H2O2 + O2. Destroys radicals which are normally produced within the cells and which are toxic to biological systems. The protein is Superoxide dismutase [Cu-Zn] 1 (sodC1) of Aquifex aeolicus (strain VF5).